The primary structure comprises 291 residues: tRNA N(3)-cytidine methyltransferase METTL8, mitochondrial (291 aa).

The transit peptide at Met-1 to Tyr-21 directs the protein to the mitochondrion. Residue Lys-80 forms a Glycyl lysine isopeptide (Lys-Gly) (interchain with G-Cter in SUMO) linkage. 2 residues coordinate S-adenosyl-L-methionine: Trp-89 and Tyr-93. Positions Phe-141 to Glu-187 are disordered. The segment covering Ser-159–Lys-168 has biased composition (low complexity). The S-adenosyl-L-methionine site is built by Gly-204, Asp-230, and Asp-256.

Belongs to the methyltransferase superfamily. METL family. In terms of assembly, interacts with EP300.

Its subcellular location is the mitochondrion. The catalysed reaction is cytidine(32) in tRNA(Ser) + S-adenosyl-L-methionine = N(3)-methylcytidine(32) in tRNA(Ser) + S-adenosyl-L-homocysteine + H(+). The enzyme catalyses cytidine(32) in tRNA(Thr) + S-adenosyl-L-methionine = N(3)-methylcytidine(32) in tRNA(Thr) + S-adenosyl-L-homocysteine + H(+). It carries out the reaction a cytidine in mRNA + S-adenosyl-L-methionine = an N(3)-methylcytidine in mRNA + S-adenosyl-L-homocysteine + H(+). Mitochondrial S-adenosyl-L-methionine-dependent methyltransferase that mediates N(3)-methylcytidine modification of residue 32 of the tRNA anticodon loop of mitochondrial tRNA(Ser)(UCN) and tRNA(Thr). N(3)-methylcytidine methylation modification regulates mitochondrial translation efficiency and is required for activity of the respiratory chain. N(3)-methylcytidine methylation of mitochondrial tRNA(Ser)(UCN) requires the formation of N(6)-dimethylallyladenosine(37) (i6A37) by TRIT1 as prerequisite. May also mediate N(3)-methylcytidine modification of mRNAs. The existence of N(3)-methylcytidine modification on mRNAs is however unclear, and additional evidences are required to confirm the role of the N(3)-methylcytidine-specific mRNA methyltransferase activity of METTL8 in vivo. The sequence is that of tRNA N(3)-cytidine methyltransferase METTL8, mitochondrial from Homo sapiens (Human).